The primary structure comprises 357 residues: uncharacterized protein (357 aa).

Positions 6 to 32 form a DNA-binding region, zn(2)-C6 fungal-type; the sequence is CIVCRQKKIKCDRKNPCTNCEQAGEKC.

It localises to the nucleus. This is an uncharacterized protein from Schizosaccharomyces pombe (strain 972 / ATCC 24843) (Fission yeast).